Reading from the N-terminus, the 243-residue chain is Clathrin light chain A (243 aa).

Met-1 is modified (blocked amino end (Met)). Disordered regions lie at residues 1–22 (MAEL…GVAG) and 49–87 (ILDG…GPTD). A compositionally biased stretch (gly residues) spans 10–20 (PAGGPALGNGV). Residues 95-157 (VDRLQSEPES…QLQKTKANNR (63 aa)) are involved in binding clathrin heavy chain. 2 positions are modified to phosphoserine: Ser-100 and Ser-201. Lys-218 is modified (N6-acetyllysine). Ser-231 carries the post-translational modification Phosphoserine. Lys-237 is subject to N6-acetyllysine.

The protein belongs to the clathrin light chain family. As to quaternary structure, clathrin coats are formed from molecules containing 3 heavy chains and 3 light chains. Interacts with CALY; the interaction stimulates clathrin self-assembly and clathrin-mediated endocytosis. Interacts with CKAP5 and TACC3 forming the TACC3/ch-TOG/clathrin complex located at spindle inter-microtubules bridges; the complex implicates clathrin triskelions.

Its subcellular location is the cytoplasmic vesicle membrane. It is found in the membrane. It localises to the coated pit. The protein resides in the cytoplasm. The protein localises to the cytoskeleton. Its subcellular location is the spindle. Its function is as follows. Clathrin is the major protein of the polyhedral coat of coated pits and vesicles. Acts as a component of the TACC3/ch-TOG/clathrin complex proposed to contribute to stabilization of kinetochore fibers of the mitotic spindle by acting as inter-microtubule bridge. This chain is Clathrin light chain A (CLTA), found in Bos taurus (Bovine).